Consider the following 129-residue polypeptide: Follitropin subunit beta (129 aa).

The signal sequence occupies residues 1-20; sequence MKTLQFFFLFCCWKAICCNS. Disulfide bonds link Cys21–Cys69, Cys35–Cys84, Cys38–Cys122, Cys46–Cys100, Cys50–Cys102, and Cys105–Cys112. Residues Asn25 and Asn42 are each glycosylated (N-linked (GlcNAc...) asparagine).

The protein belongs to the glycoprotein hormones subunit beta family. As to quaternary structure, heterodimer. The active follitropin is a heterodimer composed of an alpha chain/CGA shared with other hormones and a unique beta chain/FSHB shown here.

The protein resides in the secreted. In terms of biological role, together with the alpha chain CGA constitutes follitropin, the follicle-stimulating hormone, and provides its biological specificity to the hormone heterodimer. Binds FSHR, a G protein-coupled receptor, on target cells to activate downstream signaling pathways. Follitropin is involved in follicle development and spermatogenesis in reproductive organs. The chain is Follitropin subunit beta (FSHB) from Gorilla gorilla gorilla (Western lowland gorilla).